The following is a 250-amino-acid chain: 23S rRNA (guanosine-2'-O-)-methyltransferase RlmB (250 aa).

The S-adenosyl-L-methionine site is built by Gly-197, Ile-217, and Met-226.

Belongs to the class IV-like SAM-binding methyltransferase superfamily. RNA methyltransferase TrmH family. RlmB subfamily.

Its subcellular location is the cytoplasm. The catalysed reaction is guanosine(2251) in 23S rRNA + S-adenosyl-L-methionine = 2'-O-methylguanosine(2251) in 23S rRNA + S-adenosyl-L-homocysteine + H(+). Its function is as follows. Specifically methylates the ribose of guanosine 2251 in 23S rRNA. This is 23S rRNA (guanosine-2'-O-)-methyltransferase RlmB from Neisseria meningitidis serogroup B (strain ATCC BAA-335 / MC58).